The sequence spans 266 residues: Tryptophan synthase alpha chain (266 aa).

Catalysis depends on proton acceptor residues Glu-50 and Asp-61.

The protein belongs to the TrpA family. Tetramer of two alpha and two beta chains.

The enzyme catalyses (1S,2R)-1-C-(indol-3-yl)glycerol 3-phosphate + L-serine = D-glyceraldehyde 3-phosphate + L-tryptophan + H2O. It functions in the pathway amino-acid biosynthesis; L-tryptophan biosynthesis; L-tryptophan from chorismate: step 5/5. Functionally, the alpha subunit is responsible for the aldol cleavage of indoleglycerol phosphate to indole and glyceraldehyde 3-phosphate. The sequence is that of Tryptophan synthase alpha chain from Alkaliphilus metalliredigens (strain QYMF).